A 162-amino-acid polypeptide reads, in one-letter code: Ribosome maturation factor RimP (162 aa).

It belongs to the RimP family.

The protein resides in the cytoplasm. In terms of biological role, required for maturation of 30S ribosomal subunits. The polypeptide is Ribosome maturation factor RimP (Cupriavidus metallidurans (strain ATCC 43123 / DSM 2839 / NBRC 102507 / CH34) (Ralstonia metallidurans)).